The chain runs to 354 residues: UDP-3-O-acylglucosamine N-acyltransferase (354 aa).

The active-site Proton acceptor is the histidine 245.

It belongs to the transferase hexapeptide repeat family. LpxD subfamily. As to quaternary structure, homotrimer.

It carries out the reaction a UDP-3-O-[(3R)-3-hydroxyacyl]-alpha-D-glucosamine + a (3R)-hydroxyacyl-[ACP] = a UDP-2-N,3-O-bis[(3R)-3-hydroxyacyl]-alpha-D-glucosamine + holo-[ACP] + H(+). It participates in bacterial outer membrane biogenesis; LPS lipid A biosynthesis. In terms of biological role, catalyzes the N-acylation of UDP-3-O-acylglucosamine using 3-hydroxyacyl-ACP as the acyl donor. Is involved in the biosynthesis of lipid A, a phosphorylated glycolipid that anchors the lipopolysaccharide to the outer membrane of the cell. This is UDP-3-O-acylglucosamine N-acyltransferase from Anaeromyxobacter dehalogenans (strain 2CP-1 / ATCC BAA-258).